A 397-amino-acid chain; its full sequence is Purine nucleoside transport protein NupG (397 aa).

Helical transmembrane passes span 1–21 (MYFL…FLCS), 32–52 (IITL…TKVG), 62–82 (FFTW…PSVM), 97–117 (IIFI…PWLI), 133–153 (LESF…LAVI), 165–185 (LLTF…GSYL), 187–207 (MVPA…ALII), 242–262 (MLVG…YVAL), 282–302 (IFAY…HDAM), 335–355 (VAVA…GMIY), and 377–397 (LLVS…LFVW).

The protein belongs to the concentrative nucleoside transporter (CNT) (TC 2.A.41) family.

Its subcellular location is the cell membrane. In terms of biological role, involved in the uptake of the purine ribonucleosides inosine and guanosine. The protein is Purine nucleoside transport protein NupG (nupG) of Bacillus subtilis (strain 168).